The chain runs to 90 residues: Cytochrome c7 (90 aa).

The N-terminal stretch at 1–20 (MKRIIASLALSVFCAGLAFA) is a signal peptide. The heme site is built by His-37, His-40, Cys-47, Cys-50, His-51, His-67, Cys-70, Cys-73, His-74, Cys-84, Cys-87, and His-88.

Post-translationally, binds 3 heme groups per subunit.

Its function is as follows. May be involved in anaerobic iron respiration. This Geobacter metallireducens (strain ATCC 53774 / DSM 7210 / GS-15) protein is Cytochrome c7.